The sequence spans 65 residues: Large ribosomal subunit protein uL29 (65 aa).

Belongs to the universal ribosomal protein uL29 family.

This chain is Large ribosomal subunit protein uL29, found in Lactobacillus johnsonii (strain CNCM I-12250 / La1 / NCC 533).